The sequence spans 136 residues: Histone H3 (136 aa).

Positions 1–42 (MARTKQTARKSTGGKAPRKQLATKAAAKSAPATGGVKKPHRY) are disordered. At lysine 5 the chain carries N6-methylated lysine. Lysine 10 carries the N6-acetyllysine; alternate modification. Lysine 10 carries the N6-methylated lysine; alternate modification. Serine 11 is subject to Phosphoserine. Lysine 15 and lysine 24 each carry N6-acetyllysine. Residues 22 to 33 (ATKAAAKSAPAT) show a composition bias toward low complexity. Residues lysine 28, lysine 37, and lysine 80 each carry the N6-methylated lysine modification.

It belongs to the histone H3 family. The nucleosome is a histone octamer containing two molecules each of H2A, H2B, H3 and H4 assembled in one H3-H4 heterotetramer and two H2A-H2B heterodimers. The octamer wraps approximately 147 bp of DNA. Acetylation is generally linked to gene activation. In terms of processing, methylation at Lys-5 is linked to gene activation. Methylation at Lys-10 is linked to gene repression.

The protein localises to the nucleus. It is found in the chromosome. In terms of biological role, core component of nucleosome. Nucleosomes wrap and compact DNA into chromatin, limiting DNA accessibility to the cellular machineries which require DNA as a template. Histones thereby play a central role in transcription regulation, DNA repair, DNA replication and chromosomal stability. DNA accessibility is regulated via a complex set of post-translational modifications of histones, also called histone code, and nucleosome remodeling. The chain is Histone H3 from Acropora formosa (Staghorn coral).